A 356-amino-acid polypeptide reads, in one-letter code: Protein ATP1B4 (356 aa).

Residues 1-109 (MRRQLRSRRA…SLARTGQSRS (109 aa)) lie on the Nuclear side of the membrane. The tract at residues 26–78 (EANHNYLADEEEEAEEEAQVMMVPGLEEEEEEEEGKEEEEEREEEEGQGQSTG) is disordered. Composition is skewed to acidic residues over residues 33–43 (ADEEEEAEEEA) and 51–72 (LEEE…EEEG). Residues 110-130 (LILVIYFFFYASLAAVITLFI) form a helical; Signal-anchor for type II membrane protein membrane-spanning segment. The Perinuclear space segment spans residues 131 to 356 (YMLFLAISPY…RIIFTLNIET (226 aa)).

The protein belongs to the X(+)/potassium ATPases subunit beta family. In terms of assembly, associates with a SMAD7-transcriptional complex. Interacts with TOR1AIP1. Does not associate with known Na,K-ATPase alpha-subunits. Interacts with SNW1. Expressed in skeletal muscle (at protein level). Expressed during postnatal development in skeletal muscle and heart.

It is found in the nucleus inner membrane. May act as a transcriptional coregulator during muscle development through its interaction with SNW1. Has lost its ancestral function as a Na,K-ATPase beta-subunit. The chain is Protein ATP1B4 (Atp1b4) from Mus musculus (Mouse).